The primary structure comprises 242 residues: 7-cyano-7-deazaguanine synthase (242 aa).

14–24 (FSGGQDSATCL) is a binding site for ATP. 4 residues coordinate Zn(2+): cysteine 202, cysteine 217, cysteine 220, and cysteine 223.

This sequence belongs to the QueC family. Zn(2+) is required as a cofactor.

It carries out the reaction 7-carboxy-7-deazaguanine + NH4(+) + ATP = 7-cyano-7-deazaguanine + ADP + phosphate + H2O + H(+). It participates in purine metabolism; 7-cyano-7-deazaguanine biosynthesis. Catalyzes the ATP-dependent conversion of 7-carboxy-7-deazaguanine (CDG) to 7-cyano-7-deazaguanine (preQ(0)). This is 7-cyano-7-deazaguanine synthase from Rhodopseudomonas palustris (strain BisA53).